Here is a 248-residue protein sequence, read N- to C-terminus: Probable transcriptional regulatory protein Psyr_1407 (248 aa).

Belongs to the TACO1 family.

The protein localises to the cytoplasm. This chain is Probable transcriptional regulatory protein Psyr_1407, found in Pseudomonas syringae pv. syringae (strain B728a).